We begin with the raw amino-acid sequence, 398 residues long: Dihydrolipoyllysine-residue acetyltransferase component of acetoin cleaving system (398 aa).

Residues 2–77 (AVKVVMPKLG…PPGTAICYIG (76 aa)) enclose the Lipoyl-binding domain. N6-lipoyllysine is present on Lys-43. Residues 118–155 (KISPVARKIAEKAGLDLKQLKGTGPGGRIVKDDVTKAL) enclose the Peripheral subunit-binding (PSBD) domain. Active-site residues include His-371 and Asp-375.

This sequence belongs to the 2-oxoacid dehydrogenase family. Requires (R)-lipoate as cofactor.

It catalyses the reaction N(6)-[(R)-dihydrolipoyl]-L-lysyl-[protein] + acetyl-CoA = N(6)-[(R)-S(8)-acetyldihydrolipoyl]-L-lysyl-[protein] + CoA. It participates in ketone degradation; acetoin degradation. The chain is Dihydrolipoyllysine-residue acetyltransferase component of acetoin cleaving system (acoC) from Bacillus subtilis (strain 168).